The primary structure comprises 335 residues: Autophagy-related protein 21 (335 aa).

2 WD repeats span residues 165–205 and 210–249; these read CHSS…LVTE and YIPASIVSISFHPVEPFLACASENGTIHVFKISKQPSDPN.

This sequence belongs to the WD repeat PROPPIN family.

The protein resides in the cytoplasm. It localises to the golgi apparatus. It is found in the golgi stack membrane. Its subcellular location is the vacuole membrane. The protein localises to the preautophagosomal structure membrane. In terms of biological role, required for cytoplasm to vacuole transport (Cvt) vesicles formation and autophagy. Has a role in sporulation. In Schizosaccharomyces pombe (strain 972 / ATCC 24843) (Fission yeast), this protein is Autophagy-related protein 21 (mug179).